The chain runs to 296 residues: ATP synthase gamma chain (296 aa).

The protein belongs to the ATPase gamma chain family. As to quaternary structure, F-type ATPases have 2 components, CF(1) - the catalytic core - and CF(0) - the membrane proton channel. CF(1) has five subunits: alpha(3), beta(3), gamma(1), delta(1), epsilon(1). CF(0) has three main subunits: a, b and c.

It localises to the cell membrane. Its function is as follows. Produces ATP from ADP in the presence of a proton gradient across the membrane. The gamma chain is believed to be important in regulating ATPase activity and the flow of protons through the CF(0) complex. The sequence is that of ATP synthase gamma chain from Pseudarthrobacter chlorophenolicus (strain ATCC 700700 / DSM 12829 / CIP 107037 / JCM 12360 / KCTC 9906 / NCIMB 13794 / A6) (Arthrobacter chlorophenolicus).